Consider the following 327-residue polypeptide: uncharacterized protein (327 aa).

The region spanning 12–84 (MRIDRYLTQQ…IPITILYEDD (73 aa)) is the S4 RNA-binding domain. The active site involves D137.

The protein belongs to the pseudouridine synthase RluA family.

The enzyme catalyses a uridine in RNA = a pseudouridine in RNA. This is an uncharacterized protein from Chlorobaculum parvum (strain DSM 263 / NCIMB 8327) (Chlorobium vibrioforme subsp. thiosulfatophilum).